A 56-amino-acid polypeptide reads, in one-letter code: MIDHRILEILVCPLTKDKLQYNKDTNELISQKAKLAFPIRDGIPIMLIDEARKLEP.

The protein belongs to the UPF0434 family.

The protein is UPF0434 protein Ecaj_0131 of Ehrlichia canis (strain Jake).